The chain runs to 368 residues: Endophilin-A2 (368 aa).

Positions 1-21 (MSVAGLKKQFYKASQLVSEKV) are membrane-binding amphipathic helix. The region spanning 18–249 (SEKVGGAEGT…LKRRMREASS (232 aa)) is the BAR domain. Residues 60–87 (PNPASRAKLTMLNTVSKIRGQVKNPGYP) are required for dimerization upon membrane association. The stretch at 181–250 (EELRQAMEKF…KRRMREASSR (70 aa)) forms a coiled coil. Residues 218–254 (LVDAQLDYHRQAVQILDELADKLKRRMREASSRPKRE) form an interaction with ARC region. The tract at residues 243–308 (RMREASSRPK…PSRSMPPLDQ (66 aa)) is disordered. Positions 245-263 (REASSRPKREYKPKPRELL) are enriched in basic and acidic residues. 2 positions are modified to phosphoserine: Ser-288 and Ser-292. Thr-298 is subject to Phosphothreonine. The region spanning 306–365 (LDQPSCKALYDFEPENDGELGFHEGDIITLTNQIDENWYEGMLDGQSGFFPLSYVEVLVP) is the SH3 domain. Residue Tyr-315 is modified to Phosphotyrosine.

The protein belongs to the endophilin family. Interacts with ARC, SYNJ1 and DNM1. Interacts with PDCD6IP. Interacts with BIN2.

The protein localises to the cytoplasm. It localises to the early endosome membrane. Its subcellular location is the cell projection. It is found in the podosome. Implicated in endocytosis. May recruit other proteins to membranes with high curvature. This Bos taurus (Bovine) protein is Endophilin-A2.